The sequence spans 107 residues: Urease subunit beta (107 aa).

This sequence belongs to the urease beta subunit family. As to quaternary structure, heterotrimer of UreA (gamma), UreB (beta) and UreC (alpha) subunits. Three heterotrimers associate to form the active enzyme.

It localises to the cytoplasm. The catalysed reaction is urea + 2 H2O + H(+) = hydrogencarbonate + 2 NH4(+). It functions in the pathway nitrogen metabolism; urea degradation; CO(2) and NH(3) from urea (urease route): step 1/1. The chain is Urease subunit beta from Janthinobacterium sp. (strain Marseille) (Minibacterium massiliensis).